We begin with the raw amino-acid sequence, 347 residues long: Tetraacyldisaccharide 4'-kinase (347 aa).

Thr-54 to Thr-61 contributes to the ATP binding site.

The protein belongs to the LpxK family.

It catalyses the reaction a lipid A disaccharide + ATP = a lipid IVA + ADP + H(+). It participates in glycolipid biosynthesis; lipid IV(A) biosynthesis; lipid IV(A) from (3R)-3-hydroxytetradecanoyl-[acyl-carrier-protein] and UDP-N-acetyl-alpha-D-glucosamine: step 6/6. Transfers the gamma-phosphate of ATP to the 4'-position of a tetraacyldisaccharide 1-phosphate intermediate (termed DS-1-P) to form tetraacyldisaccharide 1,4'-bis-phosphate (lipid IVA). The protein is Tetraacyldisaccharide 4'-kinase of Rhizobium etli (strain CIAT 652).